Consider the following 100-residue polypeptide: Large ribosomal subunit protein uL23 (100 aa).

It belongs to the universal ribosomal protein uL23 family. Part of the 50S ribosomal subunit. Contacts protein L29, and trigger factor when it is bound to the ribosome.

Its function is as follows. One of the early assembly proteins it binds 23S rRNA. One of the proteins that surrounds the polypeptide exit tunnel on the outside of the ribosome. Forms the main docking site for trigger factor binding to the ribosome. This chain is Large ribosomal subunit protein uL23, found in Mycolicibacterium vanbaalenii (strain DSM 7251 / JCM 13017 / BCRC 16820 / KCTC 9966 / NRRL B-24157 / PYR-1) (Mycobacterium vanbaalenii).